The primary structure comprises 288 residues: Small ribosomal subunit protein uS2 (288 aa).

The protein belongs to the universal ribosomal protein uS2 family. Component of the small ribosomal subunit. Mature ribosomes consist of a small (40S) and a large (60S) subunit. The 40S subunit contains about 33 different proteins and 1 molecule of RNA (18S). The 60S subunit contains about 49 different proteins and 3 molecules of RNA (28S, 5.8S and 5S). Interacts with ribosomal protein S21.

The protein localises to the cytoplasm. Its function is as follows. Required for the assembly and/or stability of the 40S ribosomal subunit. Required for the processing of the 20S rRNA-precursor to mature 18S rRNA in a late step of the maturation of 40S ribosomal subunits. This Aedes aegypti (Yellowfever mosquito) protein is Small ribosomal subunit protein uS2.